We begin with the raw amino-acid sequence, 432 residues long: Nuclear pore complex-interacting protein family member B8 (432 aa).

Disordered stretches follow at residues 260-280 (RMGR…NSLS) and 353-420 (SPLP…LRTR). Residues 270 to 280 (QQHSITDNSLS) show a composition bias toward polar residues. The span at 374–402 (EVEKPPKPKRWRVDEVEQSPKPKRQREAE) shows a compositional bias: basic and acidic residues. Positions 408-420 (KPKRRRLSKLRTR) are enriched in basic residues.

Belongs to the NPIP family.

This is Nuclear pore complex-interacting protein family member B8 (NPIPB8) from Homo sapiens (Human).